The following is a 241-amino-acid chain: Homeobox protein TGIF2LX (241 aa).

2 disordered regions span residues 1–58 (MEAA…GNLP) and 126–210 (TGKD…SPEE). Over residues 21-39 (AKTQSPAQDTSIMSRNNAD) the composition is skewed to polar residues. A DNA-binding region (homeobox; TALE-type) is located at residues 48–111 (EHKKKRKGNL…INARRRILPD (64 aa)). Residues 195-206 (VSVTSPSSPELV) are compositionally biased toward low complexity.

Belongs to the TALE/TGIF homeobox family. Specifically expressed in adult testis.

It is found in the nucleus. Functionally, may have a transcription role in testis. The sequence is that of Homeobox protein TGIF2LX (TGIF2LX) from Homo sapiens (Human).